A 181-amino-acid chain; its full sequence is uncharacterized protein (181 aa).

4 consecutive transmembrane segments (helical) span residues 3 to 23 (LSQT…VLIL), 67 to 87 (ALLL…GLSV), 92 to 112 (VLGV…VLFI), and 159 to 179 (MFIL…LWII).

It belongs to the YggT family.

The protein localises to the cell membrane. This is an uncharacterized protein from Haemophilus influenzae (strain ATCC 51907 / DSM 11121 / KW20 / Rd).